Here is a 710-residue protein sequence, read N- to C-terminus: Bifunctional lysine-specific demethylase and histidyl-hydroxylase NO66 (710 aa).

The segment at 103-137 is disordered; the sequence is TDEMNKTKKKQKKIMKKEIRKRTKRKRKSVNKREL. Residues 109–132 show a composition bias toward basic residues; the sequence is TKKKQKKIMKKEIRKRTKRKRKSV. Residues 359–506 form the JmjC domain; that stretch reads CSIQLTNPQS…DLLERVIPPA (148 aa). Fe cation contacts are provided by H405, D407, and H472.

Belongs to the ROX family. NO66 subfamily. The cofactor is Fe(2+).

The protein localises to the nucleus. It catalyses the reaction N(6),N(6)-dimethyl-L-lysyl(36)-[histone H3] + 2 2-oxoglutarate + 2 O2 = L-lysyl(36)-[histone H3] + 2 formaldehyde + 2 succinate + 2 CO2. Its function is as follows. Oxygenase that can act as both a histone lysine demethylase and a ribosomal histidine hydroxylase. Specifically demethylates 'Lys-4' (H3K4me) and 'Lys-36' (H3K36me) of histone H3, thereby playing a central role in histone code. This is Bifunctional lysine-specific demethylase and histidyl-hydroxylase NO66 from Brugia malayi (Filarial nematode worm).